The chain runs to 396 residues: Elongation factor Tu (396 aa).

Residues 10-205 form the tr-type G domain; it reads KPHVNIGTIG…AVDESIPDPV (196 aa). The segment at 19 to 26 is G1; the sequence is GHVDHGKT. GTP is bound at residue 19–26; that stretch reads GHVDHGKT. A Mg(2+)-binding site is contributed by Thr-26. Residues 62-66 are G2; sequence GITIN. Residues 83 to 86 form a G3 region; the sequence is DAPG. GTP is bound by residues 83–87 and 138–141; these read DAPGH and NKAD. Positions 138–141 are G4; the sequence is NKAD. Positions 175–177 are G5; it reads SAL.

Belongs to the TRAFAC class translation factor GTPase superfamily. Classic translation factor GTPase family. EF-Tu/EF-1A subfamily. Monomer.

Its subcellular location is the cytoplasm. The catalysed reaction is GTP + H2O = GDP + phosphate + H(+). Functionally, GTP hydrolase that promotes the GTP-dependent binding of aminoacyl-tRNA to the A-site of ribosomes during protein biosynthesis. The chain is Elongation factor Tu from Mycolicibacterium vanbaalenii (strain DSM 7251 / JCM 13017 / BCRC 16820 / KCTC 9966 / NRRL B-24157 / PYR-1) (Mycobacterium vanbaalenii).